The chain runs to 219 residues: MATTFEQMRANVGKLLRGIDRYNPENLATLERYVDTQARENAYDLEANLAVLKLYQFNLAYFQTTVTAQILLKALTNLPHTDFTLCKCMIDQTHQEERPIRQILYLGNLLETCHFQSFWASLEENRDLIDGITGFEESVRKFICHVVGITYQNIEYRLLAEMLGDPLDTQVKVWMNKYGWTENEDGQIFIHNQEESVKPKNIVEKIDFESVSSIMATSQ.

In terms of domain architecture, PCI spans 43–205 (YDLEANLAVL…SVKPKNIVEK (163 aa)).

Belongs to the eIF-3 subunit K family. Component of the eukaryotic translation initiation factor 3 (eIF-3) complex, which is composed of 13 subunits: eif3a, eif3b, eif3c, eif3d, eif3e, eif3f, eif3g, eif3h, eif3i, eif3j, eif3k, eif3l and eif3m.

The protein localises to the nucleus. The protein resides in the cytoplasm. Its function is as follows. Component of the eukaryotic translation initiation factor 3 (eIF-3) complex, which is involved in protein synthesis of a specialized repertoire of mRNAs and, together with other initiation factors, stimulates binding of mRNA and methionyl-tRNAi to the 40S ribosome. The eIF-3 complex specifically targets and initiates translation of a subset of mRNAs involved in cell proliferation. The polypeptide is Eukaryotic translation initiation factor 3 subunit K (eif3k) (Danio rerio (Zebrafish)).